The sequence spans 95 residues: Bacterial microcompartment shell protein EutM (95 aa).

The region spanning 6-90 (ALGMIETKGL…PHFEVDAILP (85 aa)) is the BMC domain.

Belongs to the bacterial microcompartments protein family. In terms of assembly, homohexamer; has a positively charged pore 9 Angstroms in diameter. The hexamers pack into a two-dimensional array. May interact with EutQ.

The protein localises to the bacterial microcompartment. It participates in amine and polyamine degradation; ethanolamine degradation. In terms of biological role, a component of the bacterial microcompartment (BMC) shell dedicated to ethanolamine degradation. Each homohexamer has a central pore with an opening of up to 9.0 Angstroms. Expression of the eut operon may allow this bacteria to use ethanolamine as a carbon, nitrogen and energy source. The pore probably allows metabolite passage into and out of the BMC. The polypeptide is Bacterial microcompartment shell protein EutM (Clostridioides difficile (strain 630) (Peptoclostridium difficile)).